The sequence spans 193 residues: uncharacterized protein (193 aa).

Residues 158–193 (YNPIYDDHNPLPPEKKKSILSRTRSTKLSSGEITPV) form a disordered region. Positions 162–174 (YDDHNPLPPEKKK) are enriched in basic and acidic residues. A compositionally biased stretch (polar residues) spans 177–193 (LSRTRSTKLSSGEITPV).

This is an uncharacterized protein from Micromonas pusilla (Picoplanktonic green alga).